Here is a 469-residue protein sequence, read N- to C-terminus: Cysteine--tRNA ligase (469 aa).

Cys-33 is a Zn(2+) binding site. A 'HIGH' region motif is present at residues Ala-35–His-45. Residues Cys-211, His-236, and Glu-240 each coordinate Zn(2+). A 'KMSKS' region motif is present at residues Lys-267–Ser-271. Lys-270 contributes to the ATP binding site.

It belongs to the class-I aminoacyl-tRNA synthetase family. Monomer. The cofactor is Zn(2+).

It is found in the cytoplasm. It catalyses the reaction tRNA(Cys) + L-cysteine + ATP = L-cysteinyl-tRNA(Cys) + AMP + diphosphate. This Mycobacterium tuberculosis (strain CDC 1551 / Oshkosh) protein is Cysteine--tRNA ligase (cysS).